Reading from the N-terminus, the 315-residue chain is tRNA pseudouridine synthase B (315 aa).

His42 lines the substrate pocket. Residue Asp47 is the Nucleophile of the active site. Residues Tyr75, Tyr178, and Leu199 each contribute to the substrate site.

This sequence belongs to the pseudouridine synthase TruB family. Type 1 subfamily.

The enzyme catalyses uridine(55) in tRNA = pseudouridine(55) in tRNA. Functionally, responsible for synthesis of pseudouridine from uracil-55 in the psi GC loop of transfer RNAs. This is tRNA pseudouridine synthase B from Photorhabdus laumondii subsp. laumondii (strain DSM 15139 / CIP 105565 / TT01) (Photorhabdus luminescens subsp. laumondii).